The following is an 890-amino-acid chain: DNA mismatch repair protein MutS (890 aa).

Positions 1–13 are enriched in basic and acidic residues; sequence MDKGINLQNDKEP. Residues 1-23 are disordered; sequence MDKGINLQNDKEPSPMAEGNPAD. Residue 649 to 656 coordinates ATP; it reads GPNMGGKS.

It belongs to the DNA mismatch repair MutS family.

This protein is involved in the repair of mismatches in DNA. It is possible that it carries out the mismatch recognition step. This protein has a weak ATPase activity. The chain is DNA mismatch repair protein MutS from Paracidovorax citrulli (strain AAC00-1) (Acidovorax citrulli).